Here is a 280-residue protein sequence, read N- to C-terminus: 4-diphosphocytidyl-2-C-methyl-D-erythritol kinase (280 aa).

Lys8 is an active-site residue. 91–101 (PVSAGLAGGSS) contacts ATP. Asp133 is an active-site residue.

This sequence belongs to the GHMP kinase family. IspE subfamily.

It catalyses the reaction 4-CDP-2-C-methyl-D-erythritol + ATP = 4-CDP-2-C-methyl-D-erythritol 2-phosphate + ADP + H(+). It functions in the pathway isoprenoid biosynthesis; isopentenyl diphosphate biosynthesis via DXP pathway; isopentenyl diphosphate from 1-deoxy-D-xylulose 5-phosphate: step 3/6. Functionally, catalyzes the phosphorylation of the position 2 hydroxy group of 4-diphosphocytidyl-2C-methyl-D-erythritol. The chain is 4-diphosphocytidyl-2-C-methyl-D-erythritol kinase from Clostridium novyi (strain NT).